Consider the following 343-residue polypeptide: MIKVAINGYGTIGKRVADAVAAQKDMKVIGVSKTRPNAEAFIAKQRGYPLYIADLSKKAAFEKAGLTVAGSVEDMCKAADVIVDATPGDIGVTNKPLYEKLGKKALWQGGEDHEVAGFSFNSSCNFKDAIGRQFIRVVSCNTTGLCRIINEVDKAFGVEHVHAIMVRRGSDPGEIKKGPIDAVVLDPVTVPSHHGPDVQTVLPHISITTMAMIVPTTMMHMHAVRITTKKEVNREKVIELIKNHPRLGLVKKSAGIKSTAELKEFAMDLGRQRADLYENCIFEDSIYANKNELCFFQAIHQEADVVVENVDAIRAMTSLANDGTASIKLTNDALHFVPIQNNH.

Residues 11–12 (TI) and Gly-110 each bind NAD(+). D-glyceraldehyde 3-phosphate is bound at residue 139–141 (SCN). The Nucleophile role is filled by Cys-140. Residue Arg-168 participates in NAD(+) binding. 194 to 195 (HG) is a D-glyceraldehyde 3-phosphate binding site. Residue Gln-301 coordinates NAD(+).

It belongs to the glyceraldehyde-3-phosphate dehydrogenase family. In terms of assembly, homotetramer.

It is found in the cytoplasm. It carries out the reaction D-glyceraldehyde 3-phosphate + phosphate + NADP(+) = (2R)-3-phospho-glyceroyl phosphate + NADPH + H(+). It catalyses the reaction D-glyceraldehyde 3-phosphate + phosphate + NAD(+) = (2R)-3-phospho-glyceroyl phosphate + NADH + H(+). Its pathway is carbohydrate degradation; glycolysis; pyruvate from D-glyceraldehyde 3-phosphate: step 1/5. This chain is Glyceraldehyde-3-phosphate dehydrogenase, found in Methanoregula boonei (strain DSM 21154 / JCM 14090 / 6A8).